Here is a 443-residue protein sequence, read N- to C-terminus: Exodeoxyribonuclease 7 large subunit (443 aa).

The protein belongs to the XseA family. In terms of assembly, heterooligomer composed of large and small subunits.

It localises to the cytoplasm. The catalysed reaction is Exonucleolytic cleavage in either 5'- to 3'- or 3'- to 5'-direction to yield nucleoside 5'-phosphates.. Functionally, bidirectionally degrades single-stranded DNA into large acid-insoluble oligonucleotides, which are then degraded further into small acid-soluble oligonucleotides. The polypeptide is Exodeoxyribonuclease 7 large subunit (Stenotrophomonas maltophilia (strain R551-3)).